Here is a 1462-residue protein sequence, read N- to C-terminus: uncharacterized protein (1462 aa).

Residues 119–139 (TGYITSLCLSAILKFFSFRII) form a helical membrane-spanning segment. Ser411 and Ser420 each carry phosphoserine. The SEC7 domain occupies 541-730 (TLIESKKRKA…SEIYKAIKEN (190 aa)). An HEAT repeat occupies 1102 to 1139 (ENSEDWGLFSKLCNLLNDKNIVVRNQSLSLFHQLVNKY).

The protein resides in the cytoplasm. Its subcellular location is the golgi apparatus membrane. This is an uncharacterized protein from Schizosaccharomyces pombe (strain 972 / ATCC 24843) (Fission yeast).